The following is a 610-amino-acid chain: UvrABC system protein C (610 aa).

Residues 16–94 form the GIY-YIG domain; that stretch reads SQPGVYRMYD…IKLYQPRYNV (79 aa). The UVR domain maps to 204–239; sequence DQVLTQLISRMETASQNLEFEEAARIRDQIQAVRRV.

The protein belongs to the UvrC family. As to quaternary structure, interacts with UvrB in an incision complex.

It is found in the cytoplasm. In terms of biological role, the UvrABC repair system catalyzes the recognition and processing of DNA lesions. UvrC both incises the 5' and 3' sides of the lesion. The N-terminal half is responsible for the 3' incision and the C-terminal half is responsible for the 5' incision. In Escherichia coli O45:K1 (strain S88 / ExPEC), this protein is UvrABC system protein C.